We begin with the raw amino-acid sequence, 208 residues long: Thymidylate kinase (208 aa).

Residue 10-17 (GGEGAGKS) participates in ATP binding.

It belongs to the thymidylate kinase family.

It carries out the reaction dTMP + ATP = dTDP + ADP. In terms of biological role, phosphorylation of dTMP to form dTDP in both de novo and salvage pathways of dTTP synthesis. The chain is Thymidylate kinase from Alcanivorax borkumensis (strain ATCC 700651 / DSM 11573 / NCIMB 13689 / SK2).